A 221-amino-acid polypeptide reads, in one-letter code: Ependymin-1 (221 aa).

A signal peptide spans 1–21 (MQAFAVAALSIWLCLGATTLA). N-linked (GlcNAc...) asparagine glycosylation is found at Asn-33, Asn-73, and Asn-97.

The protein belongs to the ependymin family. Post-translationally, binds calcium through the terminal sialic acids. EPDs are synthesized in the meninx and secreted in the cerebrospinal fluid.

It is found in the secreted. May play a role in neural plasticity. May be involved during axon regeneration. The sequence is that of Ependymin-1 (epd1) from Oncorhynchus mykiss (Rainbow trout).